The chain runs to 215 residues: MNYDIADLRRDYAGETLSVESAPASPLDLFQTWFAAAREHETQDANAMTLATVDSQGLPHARVVLLKQLDDKGLVFFTNYQSHKGSELTNVPYAALVFWWPTLQRQIRIEGRVEKASAEVSDAYFANRPRDSQLGAWISQQSVEIPDRDWLEERKQRFEQVYGEQTVERPPHWGGYRVLPFLLEFWQGQPNRLHDRIRYRYHEQDAAWSKTRLAP.

Residues 9-12 and Lys67 contribute to the substrate site; that span reads RRDY. FMN-binding positions include 62 to 67, 77 to 78, Lys84, and Gln106; these read RVVLLK and FT. 3 residues coordinate substrate: Tyr124, Arg128, and Ser132. FMN is bound by residues 141–142 and Trp186; that span reads QS. Substrate is bound at residue 192–194; the sequence is RLH. Arg196 serves as a coordination point for FMN.

It belongs to the pyridoxamine 5'-phosphate oxidase family. In terms of assembly, homodimer. Requires FMN as cofactor.

The enzyme catalyses pyridoxamine 5'-phosphate + O2 + H2O = pyridoxal 5'-phosphate + H2O2 + NH4(+). It catalyses the reaction pyridoxine 5'-phosphate + O2 = pyridoxal 5'-phosphate + H2O2. It functions in the pathway cofactor metabolism; pyridoxal 5'-phosphate salvage; pyridoxal 5'-phosphate from pyridoxamine 5'-phosphate: step 1/1. Its pathway is cofactor metabolism; pyridoxal 5'-phosphate salvage; pyridoxal 5'-phosphate from pyridoxine 5'-phosphate: step 1/1. Its function is as follows. Catalyzes the oxidation of either pyridoxine 5'-phosphate (PNP) or pyridoxamine 5'-phosphate (PMP) into pyridoxal 5'-phosphate (PLP). This is Pyridoxine/pyridoxamine 5'-phosphate oxidase from Chromohalobacter salexigens (strain ATCC BAA-138 / DSM 3043 / CIP 106854 / NCIMB 13768 / 1H11).